A 63-amino-acid chain; its full sequence is Large ribosomal subunit protein bL35 (63 aa).

A compositionally biased stretch (basic residues) spans Met-1–Leu-43. A disordered region spans residues Met-1 to Lys-45.

This sequence belongs to the bacterial ribosomal protein bL35 family.

This is Large ribosomal subunit protein bL35 from Bdellovibrio bacteriovorus (strain ATCC 15356 / DSM 50701 / NCIMB 9529 / HD100).